Here is a 576-residue protein sequence, read N- to C-terminus: Eukaryotic translation initiation factor 3 subunit D (576 aa).

The disordered stretch occupies residues 103 to 176 (DSTKTRFGRG…KDYDKPQRNR (74 aa)). A compositionally biased stretch (gly residues) spans 110-122 (GRGGLARGRGQRG). Residues 165-176 (GWKDYDKPQRNR) show a composition bias toward basic and acidic residues. The interval 304-318 (TLDMVTVNENAADAP) is RNA gate.

This sequence belongs to the eIF-3 subunit D family. In terms of assembly, component of the eukaryotic translation initiation factor 3 (eIF-3) complex.

The protein localises to the cytoplasm. Its function is as follows. mRNA cap-binding component of the eukaryotic translation initiation factor 3 (eIF-3) complex, which is involved in protein synthesis of a specialized repertoire of mRNAs and, together with other initiation factors, stimulates binding of mRNA and methionyl-tRNAi to the 40S ribosome. The eIF-3 complex specifically targets and initiates translation of a subset of mRNAs involved in cell proliferation. In the eIF-3 complex, eif3d specifically recognizes and binds the 7-methylguanosine cap of a subset of mRNAs. This is Eukaryotic translation initiation factor 3 subunit D from Botryotinia fuckeliana (strain B05.10) (Noble rot fungus).